The primary structure comprises 278 residues: Maltodextrin transport system permease protein MdxG (278 aa).

A run of 6 helical transmembrane segments spans residues Ile-12–Thr-32, Thr-74–Tyr-94, Leu-108–Val-128, Met-131–Ile-151, Ile-183–Ala-203, and Val-242–Phe-262. The ABC transmembrane type-1 domain maps to Tyr-71–Leu-263.

Belongs to the binding-protein-dependent transport system permease family. MalFG subfamily. The complex is composed of two ATP-binding proteins (MsmX), two transmembrane proteins (MdxF and MdxG) and a solute-binding protein (MdxE).

The protein resides in the cell membrane. In terms of biological role, part of the ABC transporter complex involved in maltodextrin import. Probably responsible for the translocation of the substrate across the membrane. The protein is Maltodextrin transport system permease protein MdxG (mdxG) of Bacillus subtilis (strain 168).